The primary structure comprises 196 residues: Proteasome subunit beta 1 (196 aa).

The propeptide at 1–6 is removed in mature form; by autocatalysis; that stretch reads MEELPA. Residue Thr-7 is the Nucleophile of the active site.

It belongs to the peptidase T1B family. The 20S proteasome core is composed of 14 alpha and 14 beta subunits that assemble into four stacked heptameric rings, resulting in a barrel-shaped structure. The two inner rings, each composed of seven catalytic beta subunits, are sandwiched by two outer rings, each composed of seven alpha subunits. The catalytic chamber with the active sites is on the inside of the barrel. Has a gated structure, the ends of the cylinder being occluded by the N-termini of the alpha-subunits. Is capped at one or both ends by the proteasome regulatory ATPase, PAN.

The protein localises to the cytoplasm. It carries out the reaction Cleavage of peptide bonds with very broad specificity.. The formation of the proteasomal ATPase PAN-20S proteasome complex, via the docking of the C-termini of PAN into the intersubunit pockets in the alpha-rings, triggers opening of the gate for substrate entry. Interconversion between the open-gate and close-gate conformations leads to a dynamic regulation of the 20S proteasome proteolysis activity. Component of the proteasome core, a large protease complex with broad specificity involved in protein degradation. The chain is Proteasome subunit beta 1 from Saccharolobus solfataricus (strain ATCC 35092 / DSM 1617 / JCM 11322 / P2) (Sulfolobus solfataricus).